The primary structure comprises 386 residues: Succinyl-diaminopimelate desuccinylase (386 aa).

H73 contributes to the Zn(2+) binding site. D75 is a catalytic residue. A Zn(2+)-binding site is contributed by D106. The active-site Proton acceptor is the E140. Zn(2+)-binding residues include E141, E169, and H355.

Belongs to the peptidase M20A family. DapE subfamily. In terms of assembly, homodimer. Zn(2+) is required as a cofactor. The cofactor is Co(2+).

It catalyses the reaction N-succinyl-(2S,6S)-2,6-diaminopimelate + H2O = (2S,6S)-2,6-diaminopimelate + succinate. It functions in the pathway amino-acid biosynthesis; L-lysine biosynthesis via DAP pathway; LL-2,6-diaminopimelate from (S)-tetrahydrodipicolinate (succinylase route): step 3/3. Catalyzes the hydrolysis of N-succinyl-L,L-diaminopimelic acid (SDAP), forming succinate and LL-2,6-diaminopimelate (DAP), an intermediate involved in the bacterial biosynthesis of lysine and meso-diaminopimelic acid, an essential component of bacterial cell walls. The sequence is that of Succinyl-diaminopimelate desuccinylase from Delftia acidovorans (strain DSM 14801 / SPH-1).